Reading from the N-terminus, the 500-residue chain is Cytochrome c-552 (500 aa).

Residues 1–24 (MKFLIKSLAVATISILGCLQTALA) form the signal peptide. The heme c site is built by H102, C130, C133, K134, C168, C171, H172, C217, C220, and H221. Residues E223, Y224, K268, and Q270 each coordinate Ca(2+). Y224 lines the substrate pocket. H271 lines the substrate pocket. Residues H282, C289, C292, H293, H308, C321, C324, H325, and H400 each contribute to the heme c site. A disordered region spans residues 477–500 (ARAKGLLPAEEADKPVAAPKAEAK).

It belongs to the cytochrome c-552 family. Ca(2+) is required as a cofactor. The cofactor is heme c.

Its subcellular location is the periplasm. It carries out the reaction 6 Fe(III)-[cytochrome c] + NH4(+) + 2 H2O = 6 Fe(II)-[cytochrome c] + nitrite + 8 H(+). It participates in nitrogen metabolism; nitrate reduction (assimilation). Its function is as follows. Catalyzes the reduction of nitrite to ammonia, consuming six electrons in the process. The polypeptide is Cytochrome c-552 (Mannheimia haemolytica (Pasteurella haemolytica)).